We begin with the raw amino-acid sequence, 849 residues long: DNA mismatch repair protein MutS (849 aa).

665-672 (GPNMAGKS) contributes to the ATP binding site.

This sequence belongs to the DNA mismatch repair MutS family.

This protein is involved in the repair of mismatches in DNA. It is possible that it carries out the mismatch recognition step. This protein has a weak ATPase activity. This chain is DNA mismatch repair protein MutS, found in Wolbachia pipientis wMel.